We begin with the raw amino-acid sequence, 353 residues long: Protein-glutamate methylesterase/protein-glutamine glutaminase 4 (353 aa).

One can recognise a Response regulatory domain in the interval 7 to 124 (RILVAEDSPT…SPDFDADSRR (118 aa)). 4-aspartylphosphate is present on Asp58. The region spanning 158 to 350 (PVSPTRPGVV…SRLTSAFRGS (193 aa)) is the CheB-type methylesterase domain. Residues Ser172, His199, and Asp292 contribute to the active site.

It belongs to the CheB family. In terms of processing, phosphorylated by CheA. Phosphorylation of the N-terminal regulatory domain activates the methylesterase activity.

It localises to the cytoplasm. The enzyme catalyses [protein]-L-glutamate 5-O-methyl ester + H2O = L-glutamyl-[protein] + methanol + H(+). The catalysed reaction is L-glutaminyl-[protein] + H2O = L-glutamyl-[protein] + NH4(+). In terms of biological role, involved in chemotaxis. Part of a chemotaxis signal transduction system that modulates chemotaxis in response to various stimuli. Catalyzes the demethylation of specific methylglutamate residues introduced into the chemoreceptors (methyl-accepting chemotaxis proteins or MCP) by CheR. Also mediates the irreversible deamidation of specific glutamine residues to glutamic acid. The protein is Protein-glutamate methylesterase/protein-glutamine glutaminase 4 of Myxococcus xanthus (strain DK1622).